A 231-amino-acid chain; its full sequence is Uracil-DNA glycosylase (231 aa).

D71 serves as the catalytic Proton acceptor.

This sequence belongs to the uracil-DNA glycosylase (UDG) superfamily. UNG family.

Its subcellular location is the cytoplasm. It carries out the reaction Hydrolyzes single-stranded DNA or mismatched double-stranded DNA and polynucleotides, releasing free uracil.. Excises uracil residues from the DNA which can arise as a result of misincorporation of dUMP residues by DNA polymerase or due to deamination of cytosine. The polypeptide is Uracil-DNA glycosylase (Pseudomonas aeruginosa (strain UCBPP-PA14)).